The primary structure comprises 438 residues: GTPase Der (438 aa).

2 EngA-type G domains span residues 4–168 (PIVA…NDPS) and 177–352 (IRIA…DNYS). GTP is bound by residues 10–17 (GRPNVGKS), 57–61 (DTGGI), 120–123 (NKID), 183–190 (GKPNVGKS), 230–234 (DTAGL), and 295–298 (NKWD). The KH-like domain maps to 353–437 (KRVSTGLLND…GIEIEYRARK (85 aa)).

Belongs to the TRAFAC class TrmE-Era-EngA-EngB-Septin-like GTPase superfamily. EngA (Der) GTPase family. As to quaternary structure, associates with the 50S ribosomal subunit.

In terms of biological role, GTPase that plays an essential role in the late steps of ribosome biogenesis. The protein is GTPase Der of Clostridium perfringens (strain ATCC 13124 / DSM 756 / JCM 1290 / NCIMB 6125 / NCTC 8237 / Type A).